Here is a 394-residue protein sequence, read N- to C-terminus: Phosphoglycerate kinase (394 aa).

Substrate contacts are provided by residues 21–23 (DFN), R36, 59–62 (HLGR), R118, and R151. A Phosphoserine modification is found at S183. Residues K201 and G292 each contribute to the ATP site. The residue at position 299 (T299) is a Phosphothreonine. Residues E323 and 350 to 353 (GGDS) contribute to the ATP site.

Belongs to the phosphoglycerate kinase family. As to quaternary structure, monomer.

Its subcellular location is the cytoplasm. The enzyme catalyses (2R)-3-phosphoglycerate + ATP = (2R)-3-phospho-glyceroyl phosphate + ADP. It functions in the pathway carbohydrate degradation; glycolysis; pyruvate from D-glyceraldehyde 3-phosphate: step 2/5. This chain is Phosphoglycerate kinase, found in Anoxybacillus flavithermus (strain DSM 21510 / WK1).